Consider the following 75-residue polypeptide: uncharacterized protein (75 aa).

A signal peptide spans 1–25; it reads MSLFYRAVALGTLSALVWYSTSILA. A helical transmembrane segment spans residues 55–75; sequence YRALLAFSLVICGTLLVTCVI.

Its subcellular location is the host endoplasmic reticulum membrane. Plays a role in the down-regulation of the host NKG2D ligand MICA by targeting ER-resident MICA to proteasomal degradation prior to the GPI-anchoring step. In turn, MICA reduction diminishes NK-cell killing of HCMV-infected cells. This is an uncharacterized protein from Homo sapiens (Human).